Here is a 199-residue protein sequence, read N- to C-terminus: Imidazole glycerol phosphate synthase subunit HisH (199 aa).

The Glutamine amidotransferase type-1 domain occupies 3–199 (NITIIDTGCA…LKNFVEKVPF (197 aa)). Cys78 functions as the Nucleophile in the catalytic mechanism. Active-site residues include His178 and Glu180.

In terms of assembly, heterodimer of HisH and HisF.

Its subcellular location is the cytoplasm. The enzyme catalyses 5-[(5-phospho-1-deoxy-D-ribulos-1-ylimino)methylamino]-1-(5-phospho-beta-D-ribosyl)imidazole-4-carboxamide + L-glutamine = D-erythro-1-(imidazol-4-yl)glycerol 3-phosphate + 5-amino-1-(5-phospho-beta-D-ribosyl)imidazole-4-carboxamide + L-glutamate + H(+). The catalysed reaction is L-glutamine + H2O = L-glutamate + NH4(+). Its pathway is amino-acid biosynthesis; L-histidine biosynthesis; L-histidine from 5-phospho-alpha-D-ribose 1-diphosphate: step 5/9. Its function is as follows. IGPS catalyzes the conversion of PRFAR and glutamine to IGP, AICAR and glutamate. The HisH subunit catalyzes the hydrolysis of glutamine to glutamate and ammonia as part of the synthesis of IGP and AICAR. The resulting ammonia molecule is channeled to the active site of HisF. The sequence is that of Imidazole glycerol phosphate synthase subunit HisH (hisH) from Haemophilus influenzae (strain ATCC 51907 / DSM 11121 / KW20 / Rd).